A 471-amino-acid polypeptide reads, in one-letter code: UDP-N-acetylmuramate--L-alanine ligase (471 aa).

Position 112-118 (112-118 (GTHGKTT)) interacts with ATP.

Belongs to the MurCDEF family.

It is found in the cytoplasm. The catalysed reaction is UDP-N-acetyl-alpha-D-muramate + L-alanine + ATP = UDP-N-acetyl-alpha-D-muramoyl-L-alanine + ADP + phosphate + H(+). The protein operates within cell wall biogenesis; peptidoglycan biosynthesis. Its function is as follows. Cell wall formation. This chain is UDP-N-acetylmuramate--L-alanine ligase, found in Cupriavidus metallidurans (strain ATCC 43123 / DSM 2839 / NBRC 102507 / CH34) (Ralstonia metallidurans).